The following is a 1030-amino-acid chain: Germ cell nuclear acidic protein (1030 aa).

Disordered stretches follow at residues Met1 to Thr59, Glu196 to Ala245, Lys266 to Ile361, Thr375 to Leu433, Leu457 to Tyr594, and Lys699 to Ser764. Residues Ala20–Thr33 show a composition bias toward basic and acidic residues. Composition is skewed to polar residues over residues Glu298 to Asn316 and Glu329 to Gly349. A compositionally biased stretch (polar residues) spans Leu505 to Arg516. 2 stretches are compositionally biased toward basic and acidic residues: residues Asn541 to Asp553 and Asp578 to Tyr594. Positions Thr720–Lys748 are enriched in low complexity.

The protein belongs to the serine-aspartate repeat-containing protein (SDr) family.

The protein localises to the cytoplasm. It is found in the chromosome. In terms of biological role, may play a role in DNA-protein cross-links (DPCs) clearance, ensuring the genomic stability by protecting germ cells and early embryos from various sources of damage. Limits replication stress and DNA double-strand breaks. This Drosophila melanogaster (Fruit fly) protein is Germ cell nuclear acidic protein.